The following is a 713-amino-acid chain: U3 small nucleolar RNA-associated protein 8 (713 aa).

Position 95 is a phosphothreonine (Thr95). Residues Ser148 and Ser150 each carry the phosphoserine modification.

Interacts with snoRNA U3. Interacts with MPP10 and UTP25. Component of the ribosomal small subunit (SSU) processome composed of at least 40 protein subunits and snoRNA U3. In the absence of snoRNA3, forms a complex with other t-UTPs. This complex can associate with pre-18S ribosomal RNAs.

It localises to the nucleus. It is found in the nucleolus. In terms of biological role, involved in nucleolar processing of pre-18S ribosomal RNA. Also has a role in nuclear tRNA export. It acts between the steps of tRNA maturation/aminoacylation and its subsequent translocation out of the nucleus. Required for optimal pre-ribosomal RNA transcription by RNA polymerase I together with a subset of U3 proteins required for transcription (t-UTPs). The polypeptide is U3 small nucleolar RNA-associated protein 8 (UTP8) (Saccharomyces cerevisiae (strain ATCC 204508 / S288c) (Baker's yeast)).